A 400-amino-acid polypeptide reads, in one-letter code: Acetate kinase (400 aa).

Asn-10 is a Mg(2+) binding site. Position 17 (Lys-17) interacts with ATP. Substrate is bound at residue Arg-91. Residue Asp-150 is the Proton donor/acceptor of the active site. ATP contacts are provided by residues 210–214, 285–287, and 333–337; these read HLGNG, DCR, and GIGEN. Glu-387 provides a ligand contact to Mg(2+).

The protein belongs to the acetokinase family. As to quaternary structure, homodimer. Requires Mg(2+) as cofactor. The cofactor is Mn(2+).

It is found in the cytoplasm. The catalysed reaction is acetate + ATP = acetyl phosphate + ADP. The protein operates within metabolic intermediate biosynthesis; acetyl-CoA biosynthesis; acetyl-CoA from acetate: step 1/2. Its function is as follows. Catalyzes the formation of acetyl phosphate from acetate and ATP. Can also catalyze the reverse reaction. The protein is Acetate kinase of Photorhabdus laumondii subsp. laumondii (strain DSM 15139 / CIP 105565 / TT01) (Photorhabdus luminescens subsp. laumondii).